We begin with the raw amino-acid sequence, 640 residues long: Epithelial sodium channel subunit beta (640 aa).

The Cytoplasmic portion of the chain corresponds to 1–50; sequence MHVKKYLLKGLHRLQKGPGYTYKELLVWYCDNTNTHGPKRIICEGPKKKA. The chain crosses the membrane as a helical span at residues 51-71; the sequence is MWFLLTLLFAALVCWQWGIFI. Over 72–532 the chain is Extracellular; sequence RTYLSWEVSV…GGQFGFWMGG (461 aa). Cystine bridges form between Cys-98/Cys-272, Cys-184/Cys-189, Cys-196/Cys-203, Cys-249/Cys-256, Cys-361/Cys-448, Cys-386/Cys-444, Cys-390/Cys-440, Cys-399/Cys-426, and Cys-401/Cys-415. Asn-260 is a glycosylation site (N-linked (GlcNAc...) asparagine). Residues 533-553 traverse the membrane as a helical segment; it reads SVLCLIEFGEIIIDFVWITII. The Cytoplasmic segment spans residues 554–640; sequence KLVALAKSLR…IESDSEGDAI (87 aa). The disordered stretch occupies residues 590–640; it reads FQPDTAPRSPNTGPYPSEQALPIPGTPPPNYDSLRLQPLDVIESDSEGDAI. The short motif at 616–620 is the PY motif; recruits WW domain-containing proteins and is thereby required for ubiquitination and inhibition of the channel by NEDD4 and NEDD4L element; the sequence is PPPNY. Over residues 631-640 the composition is skewed to acidic residues; it reads IESDSEGDAI. Residues Ser-633 and Ser-635 each carry the phosphoserine modification.

The protein belongs to the amiloride-sensitive sodium channel (TC 1.A.6) family. SCNN1B subfamily. Component of the heterotrimeric epithelial sodium channel (ENaC) composed of an alpha/SCNN1A, a beta/SCNN1B and a gamma/SCNN1G subunit. An additional delta/SCNN1D subunit can replace the alpha/SCNN1A subunit to form an alternative channel with specific properties. Interacts with WWP1 (via WW domains). Interacts with WWP2 (via WW domains); inhibits the channel. Interacts with the full-length immature form of PCSK9 (pro-PCSK9); inhibits ENaC by promoting its proteasomal degradation. Interacts (N-glycosylated) with BPIFA1; the interaction is direct and inhibits the proteolytic processing of SCNN1A and SCNN1G and the activation of ENaC. Post-translationally, ubiquitinated. Can be ubiquitinated at multiple sites and undergo monoubiquitination and polyubiquitination. Ubiquitination by NEDD4 or NEDD4L inhibits the ENaC channel through endocytosis, intracellular retention and degradation of its individual subunits. However, some studies could not confirm the ubiquitination of this subunit of the ENaC. In terms of processing, phosphorylated on serine and threonine residues. Aldosterone and insulin increase the basal level of phosphorylation. N-glycosylated. N-glycosylation is required for interaction with BPIFA1. As to expression, detected in placenta, lung and kidney. Expressed in kidney (at protein level).

The protein localises to the apical cell membrane. The protein resides in the cytoplasmic vesicle membrane. It catalyses the reaction Na(+)(in) = Na(+)(out). Originally identified and characterized by its inhibition by the diuretic drug amiloride. This is one of the three pore-forming subunits of the heterotrimeric epithelial sodium channel (ENaC), a critical regulator of sodium balance and fluid homeostasis. ENaC operates in epithelial tissues, where it mediates the electrodiffusion of sodium ions from extracellular fluid through the apical membrane of cells, with water following osmotically. It plays a key role in maintaining sodium homeostasis through electrogenic sodium reabsorption in the kidneys. Additionally, ENaC is essential for airway surface liquid homeostasis, which is crucial for proper mucus clearance. The sequence is that of Epithelial sodium channel subunit beta from Homo sapiens (Human).